Consider the following 141-residue polypeptide: Nucleoside diphosphate kinase (141 aa).

Positions 11, 59, 87, 93, 104, and 114 each coordinate ATP. His-117 acts as the Pros-phosphohistidine intermediate in catalysis.

Belongs to the NDK family. In terms of assembly, homotetramer. It depends on Mg(2+) as a cofactor.

It localises to the cytoplasm. It catalyses the reaction a 2'-deoxyribonucleoside 5'-diphosphate + ATP = a 2'-deoxyribonucleoside 5'-triphosphate + ADP. The enzyme catalyses a ribonucleoside 5'-diphosphate + ATP = a ribonucleoside 5'-triphosphate + ADP. Major role in the synthesis of nucleoside triphosphates other than ATP. The ATP gamma phosphate is transferred to the NDP beta phosphate via a ping-pong mechanism, using a phosphorylated active-site intermediate. This is Nucleoside diphosphate kinase from Ralstonia pickettii (strain 12J).